A 450-amino-acid polypeptide reads, in one-letter code: Sorting nexin-4 (450 aa).

An N-acetylmethionine modification is found at Met-1. The disordered stretch occupies residues 1-53 (MEQAAPDPERLWQPAPLEPLSHPDAGLESMVGEETKGARDEGPGDGTMTENNF). Over residues 33-42 (EETKGARDEG) the composition is skewed to basic and acidic residues. One can recognise a PX domain in the interval 61-187 (SVSEAEKRTG…YLFLTQEGNW (127 aa)). A 1,2-diacyl-sn-glycero-3-phospho-(1D-myo-inositol-3-phosphate) contacts are provided by Arg-106, Ser-108, Lys-132, and Arg-154.

The protein belongs to the sorting nexin family. As to quaternary structure, heterodimer; heterodimerizes with SNX7 or SNX30. Interacts with WWC1/KIBRA. Identified in a complex with WWC1/KIBRA and dynein components DYNLL1 and DYNC1I2. Interacts with BIN1.

Its subcellular location is the early endosome. The protein resides in the early endosome membrane. In terms of biological role, involved in the regulation of endocytosis and in several stages of intracellular trafficking. Plays a role in recycling endocytosed transferrin receptor and prevent its degradation. Involved in autophagosome assembly by regulating trafficking and recycling of phospholipid scramblase ATG9A. This is Sorting nexin-4 from Bos taurus (Bovine).